The following is a 505-amino-acid chain: MPRTFEEECDFIDRLTDTKFRIKKGFVPNMNVEGRFYVNNSLEQLMFDELKFSCDGQGIGGFLPAVRQIANVASLPGIVGHSIGLPDIHSGYGFSIGNIAAFDVGNPESVISPGGVGFDINCGVRLLRTNLFEENVKPLKEQLTQSLFDHIPVGVGSRGAIPMLASDLVECLEMGMDWTLREGYSWAEDKEHCEEYGRMLQADASKVSLRAKKRGLPQLGTLGAGNHYAEVQVVDEIYDKHAASTMGIDEEGQVVVMLHCGSRGLGHQVATDSLVEMEKAMARDGIVVNDKQLACARINSVEGKNYFSGMAAAANFAWVNRSCITFCVRNAFQKTFGMSADDMDMQVIYDVSHNVAKMEEHMVDGRPRQLCVHRKGATRAFPAHHPLIPVDYQLIGQPVLIGGSMGTCSYVLTGTEQGLVETFGTTCHGAGRALSRAKSRRTITWDSVIDDLKKKEISIRIASPKLIMEEAPESYKNVTDVVDTCDAAGISKKAVKLRPIAVIKG.

Positions 119, 122, 227, 259, and 353 each coordinate Mn(2+). GMP is bound at residue 226-230 (NHYAE). Residues 353 to 354 (HN), 402 to 405 (GGSM), serine 409, 428 to 431 (HGAG), and lysine 504 contribute to the GMP site. Histidine 428 functions as the GMP-histidine intermediate in the catalytic mechanism.

It belongs to the RtcB family. In terms of assembly, catalytic component of the tRNA-splicing ligase complex. Mn(2+) is required as a cofactor.

The protein resides in the nucleus. It is found in the cytoplasm. It carries out the reaction a 3'-end 3'-phospho-ribonucleotide-RNA + a 5'-end dephospho-ribonucleoside-RNA + GTP = a ribonucleotidyl-ribonucleotide-RNA + GMP + diphosphate. The catalysed reaction is a 3'-end 2',3'-cyclophospho-ribonucleotide-RNA + a 5'-end dephospho-ribonucleoside-RNA + GTP + H2O = a ribonucleotidyl-ribonucleotide-RNA + GMP + diphosphate + H(+). Its function is as follows. Catalytic subunit of the tRNA-splicing ligase complex that acts by directly joining spliced tRNA halves to mature-sized tRNAs. Required for the ligation of mRNAs and specifically, regulates xbp-1 mRNA splicing during the endoplasmic reticulum stress-induced unfolded protein response. Has a neuroprotective role in the age-dependent degeneration of dopamine neurons, which is mediated by xbp-1. The sequence is that of RNA-splicing ligase RtcB homolog from Caenorhabditis elegans.